Reading from the N-terminus, the 194-residue chain is RNA polymerase II subunit A C-terminal domain phosphatase SSU72 like protein 4 (194 aa).

This sequence belongs to the SSU72 phosphatase family.

It localises to the nucleus. It catalyses the reaction O-phospho-L-seryl-[protein] + H2O = L-seryl-[protein] + phosphate. The catalysed reaction is O-phospho-L-threonyl-[protein] + H2O = L-threonyl-[protein] + phosphate. Functionally, protein phosphatase that catalyzes the dephosphorylation of the C-terminal domain of RNA polymerase II. Plays a role in RNA processing and termination. In Homo sapiens (Human), this protein is RNA polymerase II subunit A C-terminal domain phosphatase SSU72 like protein 4.